Consider the following 239-residue polypeptide: Peptidyl-tRNA hydrolase (239 aa).

TRNA is bound at residue Tyr14. His19 serves as the catalytic Proton acceptor. The tRNA site is built by Phe64, Asn66, and Asn112. The interval 188 to 225 (GGKPDAEEPQAPKKQVGQSHIHKARNAAQPKKLPATGP) is disordered.

Belongs to the PTH family. As to quaternary structure, monomer.

It localises to the cytoplasm. The enzyme catalyses an N-acyl-L-alpha-aminoacyl-tRNA + H2O = an N-acyl-L-amino acid + a tRNA + H(+). Functionally, hydrolyzes ribosome-free peptidyl-tRNAs (with 1 or more amino acids incorporated), which drop off the ribosome during protein synthesis, or as a result of ribosome stalling. Its function is as follows. Catalyzes the release of premature peptidyl moieties from peptidyl-tRNA molecules trapped in stalled 50S ribosomal subunits, and thus maintains levels of free tRNAs and 50S ribosomes. The polypeptide is Peptidyl-tRNA hydrolase (Sinorhizobium fredii (strain NBRC 101917 / NGR234)).